Reading from the N-terminus, the 405-residue chain is Peroxisomal membrane protein PEX13 (405 aa).

Residues 1–11 (MASQPPPPPKP) show a composition bias toward pro residues. The segment at 1-71 (MASQPPPPPK…SQQTGSNNVN (71 aa)) is disordered. The Peroxisomal matrix segment spans residues 1–136 (MASQPPPPPK…SSRGAFQSIE (136 aa)). The segment covering 61-71 (PSQQTGSNNVN) has biased composition (polar residues). Residues 137–157 (SIVHAFASVSMMMDATFSAVY) form a helical membrane-spanning segment. Residues 147–235 (MMMDATFSAV…EDQATNSAKS (89 aa)) form a targeting to peroxisomes region. The Cytoplasmic portion of the chain corresponds to 158 to 176 (NSFRAVLDVANHFSRLKIH). A helical membrane pass occupies residues 177–194 (FTKVFSAFALVRTIRYLY). The interval 177 to 198 (FTKVFSAFALVRTIRYLYRRLQ) is interaction with PEX19. Residues 195–235 (RRLQWMMGLRRGSENEDLWAESEGTVACLSAEDQATNSAKS) are Peroxisomal matrix-facing. A helical membrane pass occupies residues 236-256 (WPIFLFFAVILGGPYLIWKLL). Residues 257–405 (STHNDEVTDN…TGKNGDKQDL (149 aa)) are Cytoplasmic-facing. Positions 274-338 (DDHVVARAEY…PANYVKILGK (65 aa)) constitute an SH3 domain. The residue at position 356 (serine 356) is a Phosphoserine.

It belongs to the peroxin-13 family. As to quaternary structure, interacts (via SH3 domain) with PEX14 (via SH3-binding motif); forming the PEX13-PEX14 docking complex. Interacts with PEX19.

Its subcellular location is the peroxisome membrane. In terms of biological role, component of the PEX13-PEX14 docking complex, a translocon channel that specifically mediates the import of peroxisomal cargo proteins bound to PEX5 receptor. The PEX13-PEX14 docking complex forms a large import pore which can be opened to a diameter of about 9 nm. Mechanistically, PEX5 receptor along with cargo proteins associates with the PEX14 subunit of the PEX13-PEX14 docking complex in the cytosol, leading to the insertion of the receptor into the organelle membrane with the concomitant translocation of the cargo into the peroxisome matrix. Involved in the import of PTS1- and PTS2-type containing proteins. This is Peroxisomal membrane protein PEX13 from Mus musculus (Mouse).